The chain runs to 140 residues: Transcription antitermination protein NusB (140 aa).

The protein belongs to the NusB family.

Functionally, involved in transcription antitermination. Required for transcription of ribosomal RNA (rRNA) genes. Binds specifically to the boxA antiterminator sequence of the ribosomal RNA (rrn) operons. The chain is Transcription antitermination protein NusB from Streptococcus pneumoniae serotype 2 (strain D39 / NCTC 7466).